Reading from the N-terminus, the 192-residue chain is Protein Syd (192 aa).

This sequence belongs to the Syd family.

The protein localises to the cell inner membrane. Its function is as follows. Interacts with the SecY protein in vivo. May bind preferentially to an uncomplexed state of SecY, thus functioning either as a chelating agent for excess SecY in the cell or as a regulatory factor that negatively controls the translocase function. The protein is Protein Syd of Hahella chejuensis (strain KCTC 2396).